We begin with the raw amino-acid sequence, 425 residues long: NAD kinase 2, mitochondrial (425 aa).

The N-terminal 45 residues, 1 to 45, are a transit peptide targeting the mitochondrion; the sequence is MDTSAIQQTLVKIYQRQAWQPPRKASKNETTVGKPRELAGGGSPA. The tract at residues 20–46 is disordered; that stretch reads QPPRKASKNETTVGKPRELAGGGSPAD. Position 59 is an N6-acetyllysine; alternate (Lys-59). Lys-59 bears the N6-succinyllysine; alternate mark. Residue Ser-171 is modified to Phosphoserine. Lys-285 is modified (N6-succinyllysine). Lys-300 bears the N6-acetyllysine; alternate mark. Lys-300 carries the post-translational modification N6-succinyllysine; alternate. Residue Ser-350 is modified to Phosphoserine. Lys-380 bears the N6-acetyllysine mark.

Belongs to the NAD kinase family. As to quaternary structure, homodimer.

The protein resides in the mitochondrion. The catalysed reaction is NAD(+) + ATP = ADP + NADP(+) + H(+). Inhibited by NADH, NADPH and NADP(+). Mitochondrial NAD(+) kinase that phosphorylates NAD(+) to yield NADP(+). Can use both ATP or inorganic polyphosphate as the phosphoryl donor. The chain is NAD kinase 2, mitochondrial (Nadk2) from Rattus norvegicus (Rat).